A 64-amino-acid polypeptide reads, in one-letter code: PYLa/PGLa B (64 aa).

The signal sequence occupies residues M1–A20. A propeptide spanning residues E21–R35 is cleaved from the precursor. Position 59 is a leucine amide (L59). A propeptide spanning residues G60–S64 is cleaved from the precursor.

Belongs to the gastrin/cholecystokinin family. Magainin subfamily. Expressed by the skin glands. Synthesized in the stomach and stored in a novel granular multinucleated cell in the gastric mucosa. Stored as active, processed peptides in large granules within the granular gland secretions of the skin.

Its subcellular location is the secreted. PGLa and PGLa-H display a broad-spectrum of antibacterial activity against a range of Gram-positive and Gram-negative bacteria. PGLa also displays antifungal activity against C.albicans ATCC 14053. PGLa-H shows moderate antibacterial activity against the multidrug-resistant methicillin-resistant S.aureus (MRSA) but exhibits very little hemolytic activity. The sequence is that of PYLa/PGLa B (pgla-b) from Xenopus laevis (African clawed frog).